The primary structure comprises 994 residues: Tyrosine-protein kinase Mer (994 aa).

The signal sequence occupies residues 1–18 (MVLAPLLLGLLLLPALWS). Over 19-497 (GGTAEKWEET…TPAPGNTDSM (479 aa)) the chain is Extracellular. The disordered stretch occupies residues 44-78 (VNHRPFSAPHSSRDQLPPPQTGRSHPAHTAAPQVT). 2 consecutive Ig-like C2-type domains span residues 75-181 (PQVT…EIVS) and 192-268 (PYFI…LTVS). Residues N91, N108, N165, N202, N210, N229, N289, N311, N324, N331, N349, N384, N390, N437, and N449 are each glycosylated (N-linked (GlcNAc...) asparagine). C109 and C170 are joined by a disulfide. A disulfide bridge connects residues C213 and C257. Fibronectin type-III domains are found at residues 281-376 (PPTE…TTEG) and 381-478 (APLN…IPEH). A helical membrane pass occupies residues 498 to 518 (FIILGCFCGFILIGLILCISL). Residues 519–994 (ALRRRVQETK…DSLEDSEVLM (476 aa)) are Cytoplasmic-facing. S538 is subject to Phosphoserine. A Protein kinase domain is found at 582-852 (LVLGKVLGEG…SVLRLQLEKL (271 aa)). ATP is bound by residues 588 to 596 (LGEGEFGSV) and K610. D718 (proton acceptor) is an active-site residue. Residues Y744, Y748, Y749, and Y867 each carry the phosphotyrosine; by autocatalysis modification.

This sequence belongs to the protein kinase superfamily. Tyr protein kinase family. AXL/UFO subfamily. Interacts (upon activation) with TNK2; stimulates TNK2 autophosphorylation. Interacts (via N-terminus) with extracellular ligands LGALS3, TUB, TULP1 and GAS6. Interacts with VAV1 in a phosphotyrosine-independent manner. Interacts with TIMD4; this interaction enhances TIMD4-mediated efferocytosis. Autophosphorylated on Tyr-744, Tyr-748 and Tyr-749 in the activation loop allowing full activity. Autophosphorylated on Tyr-867 leading to recruitment of downstream partners of the signaling cascade such as PLCG2. As to expression, expressed predominantly in the hematopoietic lineages: macrophages, NK cells, NKT cells, dendritic cells and platelets.

Its subcellular location is the cell membrane. It catalyses the reaction L-tyrosyl-[protein] + ATP = O-phospho-L-tyrosyl-[protein] + ADP + H(+). Receptor tyrosine kinase that transduces signals from the extracellular matrix into the cytoplasm by binding to several ligands including LGALS3, TUB, TULP1 or GAS6. Regulates many physiological processes including cell survival, migration, differentiation, and phagocytosis of apoptotic cells (efferocytosis). Ligand binding at the cell surface induces autophosphorylation of MERTK on its intracellular domain that provides docking sites for downstream signaling molecules. Following activation by ligand, interacts with GRB2 or PLCG2 and induces phosphorylation of MAPK1, MAPK2, FAK/PTK2 or RAC1. MERTK signaling plays a role in various processes such as macrophage clearance of apoptotic cells, platelet aggregation, cytoskeleton reorganization and engulfment. Functions in the retinal pigment epithelium (RPE) as a regulator of rod outer segments fragments phagocytosis. Also plays an important role in inhibition of Toll-like receptors (TLRs)-mediated innate immune response by activating STAT1, which selectively induces production of suppressors of cytokine signaling SOCS1 and SOCS3. The polypeptide is Tyrosine-protein kinase Mer (Mertk) (Mus musculus (Mouse)).